The following is a 90-amino-acid chain: Small ribosomal subunit protein bS16 (90 aa).

The protein belongs to the bacterial ribosomal protein bS16 family.

The sequence is that of Small ribosomal subunit protein bS16 from Moorella thermoacetica (strain ATCC 39073 / JCM 9320).